A 228-amino-acid chain; its full sequence is Probable U3 small nucleolar RNA-associated protein 11 (228 aa).

Disordered regions lie at residues 1 to 23 (MSSL…EARK) and 192 to 211 (SMQK…DDEL). Residues 12–23 (AHKERSQPEARK) are compositionally biased toward basic and acidic residues.

This sequence belongs to the UTP11 family. Component of the ribosomal small subunit (SSU) processome.

It is found in the nucleus. The protein resides in the nucleolus. In terms of biological role, involved in nucleolar processing of pre-18S ribosomal RNA. This chain is Probable U3 small nucleolar RNA-associated protein 11, found in Arabidopsis thaliana (Mouse-ear cress).